We begin with the raw amino-acid sequence, 180 residues long: Inner membrane-spanning protein YciB (180 aa).

Transmembrane regions (helical) follow at residues 25–45, 49–69, 76–96, 118–138, and 150–170; these read QNAT…CYII, VSKL…ITLI, IKIK…MSGI, IILS…NEVV, and FKVF…LPLL.

It belongs to the YciB family.

Its subcellular location is the cell inner membrane. Functionally, plays a role in cell envelope biogenesis, maintenance of cell envelope integrity and membrane homeostasis. This is Inner membrane-spanning protein YciB from Rickettsia prowazekii (strain Madrid E).